A 220-amino-acid polypeptide reads, in one-letter code: Small ribosomal subunit protein uS3c (220 aa).

One can recognise a KH type-2 domain in the interval 39–120 (IRDFIKNYVK…KLIIDIIRIT (82 aa)).

This sequence belongs to the universal ribosomal protein uS3 family. In terms of assembly, part of the 30S ribosomal subunit.

It is found in the plastid. This chain is Small ribosomal subunit protein uS3c (rps3), found in Epifagus virginiana (Beechdrops).